The sequence spans 227 residues: Cytochrome c oxidase subunit 2 (227 aa).

Over 1–14 (MAYPFQLGLQDATS) the chain is Mitochondrial intermembrane. Residues 15 to 45 (PIMEELLHFHDHTLMIVFLISSLVLYIISLM) form a helical membrane-spanning segment. Residues 46-59 (LTTKLTHTSTMDAQ) lie on the Mitochondrial matrix side of the membrane. The chain crosses the membrane as a helical span at residues 60–87 (EVETVWTILPAIILILIALPSLRILYMM). The Mitochondrial intermembrane portion of the chain corresponds to 88–227 (DEINNPSLTV…YFETWSALMV (140 aa)). Residues H161, C196, E198, C200, H204, and M207 each contribute to the Cu cation site. E198 is a binding site for Mg(2+). Y218 bears the Phosphotyrosine mark.

The protein belongs to the cytochrome c oxidase subunit 2 family. Component of the cytochrome c oxidase (complex IV, CIV), a multisubunit enzyme composed of 14 subunits. The complex is composed of a catalytic core of 3 subunits MT-CO1, MT-CO2 and MT-CO3, encoded in the mitochondrial DNA, and 11 supernumerary subunits COX4I, COX5A, COX5B, COX6A, COX6B, COX6C, COX7A, COX7B, COX7C, COX8 and NDUFA4, which are encoded in the nuclear genome. The complex exists as a monomer or a dimer and forms supercomplexes (SCs) in the inner mitochondrial membrane with NADH-ubiquinone oxidoreductase (complex I, CI) and ubiquinol-cytochrome c oxidoreductase (cytochrome b-c1 complex, complex III, CIII), resulting in different assemblies (supercomplex SCI(1)III(2)IV(1) and megacomplex MCI(2)III(2)IV(2)). Found in a complex with TMEM177, COA6, COX18, COX20, SCO1 and SCO2. Interacts with TMEM177 in a COX20-dependent manner. Interacts with COX20. Interacts with COX16. Requires Cu cation as cofactor.

It localises to the mitochondrion inner membrane. It catalyses the reaction 4 Fe(II)-[cytochrome c] + O2 + 8 H(+)(in) = 4 Fe(III)-[cytochrome c] + 2 H2O + 4 H(+)(out). Its function is as follows. Component of the cytochrome c oxidase, the last enzyme in the mitochondrial electron transport chain which drives oxidative phosphorylation. The respiratory chain contains 3 multisubunit complexes succinate dehydrogenase (complex II, CII), ubiquinol-cytochrome c oxidoreductase (cytochrome b-c1 complex, complex III, CIII) and cytochrome c oxidase (complex IV, CIV), that cooperate to transfer electrons derived from NADH and succinate to molecular oxygen, creating an electrochemical gradient over the inner membrane that drives transmembrane transport and the ATP synthase. Cytochrome c oxidase is the component of the respiratory chain that catalyzes the reduction of oxygen to water. Electrons originating from reduced cytochrome c in the intermembrane space (IMS) are transferred via the dinuclear copper A center (CU(A)) of subunit 2 and heme A of subunit 1 to the active site in subunit 1, a binuclear center (BNC) formed by heme A3 and copper B (CU(B)). The BNC reduces molecular oxygen to 2 water molecules using 4 electrons from cytochrome c in the IMS and 4 protons from the mitochondrial matrix. The polypeptide is Cytochrome c oxidase subunit 2 (MT-CO2) (Canis adustus (Side-striped jackal)).